Consider the following 534-residue polypeptide: Coiled-coil domain-containing protein 183 (534 aa).

Coiled coils occupy residues 10–54 (EEQT…NIRR), 136–209 (DASK…DMKI), and 323–396 (LAQR…HSNM).

This Homo sapiens (Human) protein is Coiled-coil domain-containing protein 183 (CCDC183).